Consider the following 323-residue polypeptide: Fructose-1,6-bisphosphatase class 1 (323 aa).

Mg(2+) is bound by residues glutamate 84, aspartate 103, leucine 105, and aspartate 106. Residues 106–109, asparagine 198, and lysine 264 contribute to the substrate site; that span reads DGSS. Glutamate 270 lines the Mg(2+) pocket.

Belongs to the FBPase class 1 family. In terms of assembly, homotetramer. Requires Mg(2+) as cofactor.

It is found in the cytoplasm. The enzyme catalyses beta-D-fructose 1,6-bisphosphate + H2O = beta-D-fructose 6-phosphate + phosphate. Its pathway is carbohydrate biosynthesis; gluconeogenesis. This Pseudoalteromonas atlantica (strain T6c / ATCC BAA-1087) protein is Fructose-1,6-bisphosphatase class 1.